An 877-amino-acid chain; its full sequence is Leucine--tRNA ligase (877 aa).

Residues 48–58 carry the 'HIGH' region motif; the sequence is PYPSGKLHMGH. Residues 636–640 carry the 'KMSKS' region motif; sequence KMSKS. Lysine 639 serves as a coordination point for ATP.

Belongs to the class-I aminoacyl-tRNA synthetase family.

The protein localises to the cytoplasm. It catalyses the reaction tRNA(Leu) + L-leucine + ATP = L-leucyl-tRNA(Leu) + AMP + diphosphate. The protein is Leucine--tRNA ligase of Ralstonia pickettii (strain 12J).